An 850-amino-acid polypeptide reads, in one-letter code: Receptor-like serine/threonine-protein kinase SD1-8 (850 aa).

Residues 1–26 (MRGLPNFYHSYTFFFFFLLILFPAYS) form the signal peptide. Residues 27-441 (ISANTLSASE…LEDKRNRSAK (415 aa)) lie on the Extracellular side of the membrane. The 123-residue stretch at 31–153 (TLSASESLTI…KNSAPDGVLW (123 aa)) folds into the Bulb-type lectin domain. Residues Asn43, Asn118, and Asn242 are each glycosylated (N-linked (GlcNAc...) asparagine). Residues 292 to 328 (PKDQCDEYKECGVYGYCDSNTSPVCNCIKGFKPRNPQ) enclose the EGF-like domain. 4 cysteine pairs are disulfide-bonded: Cys296-Cys308, Cys302-Cys316, Cys378-Cys403, and Cys382-Cys388. The region spanning 347–428 (CGGGDGFVRL…GGQDLYVRLA (82 aa)) is the PAN domain. Asn387 and Asn437 each carry an N-linked (GlcNAc...) asparagine glycan. A helical membrane pass occupies residues 442 to 462 (IIGSSIGVSVLLLLSFIIFFL). At 463–850 (WKRKQKRSIL…QITVSVLDAR (388 aa)) the chain is on the cytoplasmic side. The Protein kinase domain occupies 526 to 807 (FSNANKLGQG…LMLGSESTTI (282 aa)). Residues 532–540 (LGQGGFGIV) and Lys554 each bind ATP. The caM-binding stretch occupies residues 615–632 (SRNSKLNWQMRFDIINGI). Asp651 functions as the Proton acceptor in the catalytic mechanism.

The protein belongs to the protein kinase superfamily. Ser/Thr protein kinase family. As to quaternary structure, interacts with PUB9, PUB13, PUB14 and PUB38. In terms of tissue distribution, expressed in the root-hypocotyl transition zone, at the base of lateral roots, axillary buds and pedicels.

It localises to the cell membrane. The catalysed reaction is L-seryl-[protein] + ATP = O-phospho-L-seryl-[protein] + ADP + H(+). The enzyme catalyses L-threonyl-[protein] + ATP = O-phospho-L-threonyl-[protein] + ADP + H(+). Involved in the regulation of cellular expansion and differentiation. In Arabidopsis thaliana (Mouse-ear cress), this protein is Receptor-like serine/threonine-protein kinase SD1-8 (SD18).